We begin with the raw amino-acid sequence, 360 residues long: Mannose-1-phosphate guanylyltransferase catalytic subunit beta (360 aa).

The tract at residues 2–222 (KALILVGGYG…QGFWMDIGQP (221 aa)) is substrate-binding domain. Asp-110 lines the GDP-alpha-D-mannose pocket. Residue Asp-110 participates in Mg(2+) binding. Residue Lys-162 is part of the active site. Asp-218 serves as a coordination point for GDP-alpha-D-mannose. Mg(2+) is bound at residue Asp-218. The segment at 245 to 360 (CSGPGIVGNV…ESVPEPGIIM (116 aa)) is hexapeptide repeat domain.

It belongs to the transferase hexapeptide repeat family. Component of the GMPPA-GMPPB mannose-1-phosphate guanylyltransferase complex composed of 4 GMPPA subunits and 8 GMPPB subunits; the complex is organized into three layers, a central layer made up of 2 GMPPA dimers sandwiched between two layers each made up of 2 GMPPB dimers. GMPPB catalytic activity is reduced when part of the complex and binding of GDP-alpha-D-Mannose by GMPPA induces allosteric feedback inhibition of GMPPB. It depends on Mg(2+) as a cofactor. In terms of tissue distribution, expressed in the liver (at protein level).

The protein localises to the cytoplasm. The enzyme catalyses alpha-D-mannose 1-phosphate + GTP + H(+) = GDP-alpha-D-mannose + diphosphate. It participates in nucleotide-sugar biosynthesis; GDP-alpha-D-mannose biosynthesis; GDP-alpha-D-mannose from alpha-D-mannose 1-phosphate (GTP route): step 1/1. Enzyme activity is reduced by incorporation into the GMPPA-GMPPB mannose-1-phosphate guanylyltransferase complex. Allosterically inhibited, when part of the GMPPA-GMPPB complex, by GDP-alpha-D-mannose binding to GMPPA. Its function is as follows. Catalytic subunit of the GMPPA-GMPPB mannose-1-phosphate guanylyltransferase complex. Catalyzes the formation of GDP-mannose, an essential precursor of glycan moieties of glycoproteins and glycolipids. Can catalyze the reverse reaction in vitro. Together with GMPPA regulates GDP-alpha-D-mannose levels. In Sus scrofa (Pig), this protein is Mannose-1-phosphate guanylyltransferase catalytic subunit beta.